The following is an 822-amino-acid chain: LPS-assembly protein LptD (822 aa).

The N-terminal stretch at 1-37 (MRRASRSPFILSPVAHAVSRLVLCATLGWTYAGSGHA) is a signal peptide. A disordered region spans residues 38-97 (QVPAPAGGSEVPLGARPPASAPVAAQQETPLKLKSSPALAEEVPNGPGDEGPTFVFGDSV).

Belongs to the LptD family. As to quaternary structure, component of the lipopolysaccharide transport and assembly complex. Interacts with LptE and LptA.

Its subcellular location is the cell outer membrane. Its function is as follows. Together with LptE, is involved in the assembly of lipopolysaccharide (LPS) at the surface of the outer membrane. The protein is LPS-assembly protein LptD of Polaromonas sp. (strain JS666 / ATCC BAA-500).